Here is a 2336-residue protein sequence, read N- to C-terminus: Voltage-dependent N-type calcium channel subunit alpha-1B (2336 aa).

The tract at residues 1–37 (MVRFGDELGGRYGGTGGGERARGGGAGGAGGPGQGGL) is disordered. The Cytoplasmic segment spans residues 1–90 (MVRFGDELGG…DNVVRKYAKR (90 aa)). Gly residues predominate over residues 10 to 37 (GRYGGTGGGERARGGGAGGAGGPGQGGL). Residue R22 is modified to Omega-N-methylarginine. The stretch at 82 to 359 (NVVRKYAKRI…LVLGVLSGEF (278 aa)) is one I repeat. A helical membrane pass occupies residues 91 to 114 (ITEWPPFEYMILATIIANCIVLAL). Residues 115 to 131 (EQHLPDGDKTPMSERLD) lie on the Extracellular side of the membrane. A helical transmembrane segment spans residues 132–152 (DTEPYFIGIFCFEAGIKIIAL). Residues 153-163 (GFVFHKGSYLR) lie on the Cytoplasmic side of the membrane. A helical membrane pass occupies residues 164–182 (NGWNVMDFVVVLTEILATA). Over 183 to 187 (GTDFD) the chain is Extracellular. The chain crosses the membrane as a helical span at residues 188–211 (LRTLRAVRVLRPLKLVSGIPSLQV). Residues 212–221 (VLKSIMKAMV) are Cytoplasmic-facing. Residues 222–244 (PLLQIGLLLFFAILMFAIIGLEF) form a helical membrane-spanning segment. At 245 to 331 (YMGKFHKACF…NTNDAAGNTW (87 aa)) the chain is on the extracellular side. An N-linked (GlcNAc...) asparagine glycan is attached at N256. A helical membrane pass occupies residues 332 to 356 (NWLYFIPLIIIGSFFMLNLVLGVLS). Topologically, residues 357-483 (GEFAKERERV…FLIRRMVKAQ (127 aa)) are cytoplasmic. Residues 379 to 396 (QQIERELNGYLEWIFKAE) form a binding to the beta subunit region. S411 carries the post-translational modification Phosphoserine. 452-459 (ASLKSGKT) lines the ATP pocket. An II repeat occupies 469–713 (EKMFRFLIRR…VFLAIAVDNL (245 aa)). Residues 484 to 502 (SFYWVVLCVVALNTLCVAM) form a helical membrane-spanning segment. Residues 503 to 512 (VHYNQPQRLT) are Extracellular-facing. Residues 513–535 (TALYFAEFVFLGLFLTEMSLKMY) form a helical membrane-spanning segment. Topologically, residues 536–545 (GLGPRSYFRS) are cytoplasmic. An a 1,2-diacyl-sn-glycero-3-phospho-(1D-myo-inositol-4,5-bisphosphate)-binding site is contributed by S545. A helical transmembrane segment spans residues 546-567 (SFNCFDFGVIVGSIFEVVWAAI). Residues 568–574 (KPGTSFG) are Extracellular-facing. The helical transmembrane segment at 575-587 (ISVLRALRLLRIF) threads the bilayer. Residues R585 and K588 each contribute to the a 1,2-diacyl-sn-glycero-3-phospho-(1D-myo-inositol-4,5-bisphosphate) site. The Cytoplasmic portion of the chain corresponds to 588-605 (KVTKYWNSLRNLVVSLLN). Residues 606-631 (SMKSIISLLFLLFLFIVVFALLGMQL) traverse the membrane as a helical segment. At 632–683 (FGGQFNFQDETPTTNFDTFPAAILTVFQILTGEDWNAVMYHGIESQGGVSKG) the chain is on the extracellular side. A helical membrane pass occupies residues 684-710 (MFSSFYFIVLTLFGNYTLLNVFLAIAV). The Cytoplasmic segment spans residues 711-1149 (DNLANAQELT…FCHYIVTMRY (439 aa)). 3 positions are modified to phosphoserine: S746, S749, and S784. 2 disordered regions span residues 800-1021 (YAST…HQPK) and 1051-1076 (EQPEDADNQRNVTRMGSQPSDPSTTV). Basic and acidic residues-rich tracts occupy residues 806 to 827 (VRPDMKTHMDRPLVVEPGRDGL), 870 to 891 (EQDRTDCPKAESTETGAREERA), 920 to 930 (GSPEEATEREP), 938 to 948 (HAQDSSKEGKE), 970 to 981 (GPRETENSEEPT), and 996 to 1021 (PPEREVAEKESNVVEGDKETRNHQPK). Residues 1059-1076 (QRNVTRMGSQPSDPSTTV) are compositionally biased toward polar residues. Position 1067 is a phosphoserine (S1067). The III repeat unit spans residues 1135-1421 (NLLRRFCHYI…IFVALIIITF (287 aa)). A helical transmembrane segment spans residues 1150-1168 (FEMVILVVIALSSIALAAE). At 1169-1176 (DPVRTDSF) the chain is on the extracellular side. Residues 1177-1201 (RNNALKYMDYIFTGVFTFEMVIKMI) form a helical membrane-spanning segment. At 1202-1215 (DLGLLLHPGAYFRD) the chain is on the cytoplasmic side. A helical membrane pass occupies residues 1216 to 1240 (LWNILDFIVVSGALVAFAFSSFMGG). Residues 1241–1246 (SKGKDI) lie on the Extracellular side of the membrane. Residues 1247–1267 (NTIKSLRVLRVLRPLKTIKRL) form a helical membrane-spanning segment. At 1268–1285 (PKLKAVFDCVVNSLKNVL) the chain is on the cytoplasmic side. Residues 1286 to 1305 (NILIVYMLFMFIFAVIAVQL) traverse the membrane as a helical segment. At 1306–1392 (FKGKFFYCTD…EQGPSPGFRM (87 aa)) the chain is on the extracellular side. A helical transmembrane segment spans residues 1393–1418 (ELSIFYVVYFVVFPFFFVNIFVALII). At 1419–1473 (ITFQEQGDKVMSECSLEKNERACIDFAISAKPLTRYMPQNKQSFQYKTWTFVVSP) the chain is on the cytoplasmic side. The IV repeat unit spans residues 1458–1711 (NKQSFQYKTW…LFVAVIMDNF (254 aa)). Residues 1474–1492 (PFEYFIMAMIALNTVVLMM) form a helical membrane-spanning segment. Over 1493–1500 (KFYDAPYE) the chain is Extracellular. A helical membrane pass occupies residues 1501–1525 (YELMLKCLNIVFTSMFSLECILKII). The Cytoplasmic segment spans residues 1526 to 1535 (AFGVLNYFRD). The chain crosses the membrane as a helical span at residues 1536 to 1557 (AWNVFDFVTVLGSITDILVTEI). Residues 1558–1563 (ANNFIN) lie on the Extracellular side of the membrane. An N-linked (GlcNAc...) asparagine glycan is attached at N1563. A helical transmembrane segment spans residues 1564–1582 (LSFLRLFRAARLIKLCRQG). Over 1583 to 1601 (YTIRILLWTFVQSFKALPY) the chain is Cytoplasmic. The chain crosses the membrane as a helical span at residues 1602–1621 (VCLLIAMLFFIYAIIGMQVF). Residues 1622-1683 (GNIALDDGTS…ANASECGSDF (62 aa)) are Extracellular-facing. N1675 carries N-linked (GlcNAc...) asparagine glycosylation. The helical transmembrane segment at 1684–1707 (AYFYFVSFIFLCSFLMLNLFVAVI) threads the bilayer. Residues 1708–2336 (MDNFEYLTRD…YHHPDQDHWC (629 aa)) lie on the Cytoplasmic side of the membrane. Positions 1724-1759 (HHLDEFIRVWAEYDPAACGRISYNDMFEMLKHMSPP) constitute an EF-hand domain. Positions 1737, 1743, and 1748 each coordinate Ca(2+). A disordered region spans residues 1981–2202 (TLRGPDGEPQ…TPRPSITYKT (222 aa)). The span at 2048–2062 (SHHHHHRCHRRRDKK) shows a compositional bias: basic residues. S2065 is modified (phosphoserine). Residues 2097–2113 (CRRERKQERGRSQERRQ) are compositionally biased toward basic and acidic residues. The span at 2161-2177 (GSGSVNGSPLMSTSGAS) shows a compositional bias: polar residues. A phosphoserine mark is found at S2221, S2230, and S2253.

This sequence belongs to the calcium channel alpha-1 subunit (TC 1.A.1.11) family. CACNA1B subfamily. In terms of assembly, multisubunit complex consisting of alpha-1, alpha-2, beta and delta subunits in a 1:1:1:1 ratio. The channel activity is directed by the pore-forming and voltage-sensitive alpha-1 subunit. In many cases, this subunit is sufficient to generate voltage-sensitive calcium channel activity. The auxiliary subunits beta and alpha-2/delta linked by a disulfide bridge regulate the channel activity. Interacts with RIMS1. Interacts with FMR1 (via C-terminus); this interaction induces a decrease in the number of presynaptic functional CACNA1B channels at the cell surface. Phosphorylated in vitro by CaM-kinase II, PKA, PKC and CGPK. In terms of tissue distribution, central nervous system.

The protein localises to the membrane. The catalysed reaction is Ca(2+)(in) = Ca(2+)(out). With respect to regulation, is specifically blocked by omega-conotoxin GVIA. Is specifically blocked by omega-conotoxin MVIIA (ziconotide). Is insensitive to dihydropyridines (DHP). Its function is as follows. Voltage-sensitive calcium channels (VSCC) mediate the entry of calcium ions into excitable cells and are also involved in a variety of calcium-dependent processes, including muscle contraction, hormone or neurotransmitter release, gene expression, cell motility, cell division and cell death. This alpha-1B subunit gives rise to N-type calcium currents. N-type calcium channels belong to the 'high-voltage activated' (HVA) group. They are involved in pain signaling. Calcium channels containing alpha-1B subunit may play a role in directed migration of immature neurons. Mediates Ca(2+) release probability at hippocampal neuronal soma and synaptic terminals. In Rattus norvegicus (Rat), this protein is Voltage-dependent N-type calcium channel subunit alpha-1B (Cacna1b).